A 152-amino-acid chain; its full sequence is Lipoprotein signal peptidase (152 aa).

A run of 2 helical transmembrane segments spans residues 55 to 75 (NKMW…VFYM) and 85 to 105 (LGIS…DRVF). Catalysis depends on residues Asp-111 and Asp-129. Residues 124–144 (VFNIADSALCIGVVLIIIQTL) form a helical membrane-spanning segment.

It belongs to the peptidase A8 family.

Its subcellular location is the cell membrane. The catalysed reaction is Release of signal peptides from bacterial membrane prolipoproteins. Hydrolyzes -Xaa-Yaa-Zaa-|-(S,diacylglyceryl)Cys-, in which Xaa is hydrophobic (preferably Leu), and Yaa (Ala or Ser) and Zaa (Gly or Ala) have small, neutral side chains.. Its pathway is protein modification; lipoprotein biosynthesis (signal peptide cleavage). In terms of biological role, this protein specifically catalyzes the removal of signal peptides from prolipoproteins. The protein is Lipoprotein signal peptidase of Bacillus cereus (strain G9842).